The chain runs to 159 residues: Transcriptional repressor NrdR (159 aa).

Residues 3–34 (CPFCRHDDTQVVDSRVSEDGAAIRRRRRCSAC) fold into a zinc finger. The 91-residue stretch at 49–139 (PFVVKKDGSR…VYRRFEDVSE (91 aa)) folds into the ATP-cone domain.

This sequence belongs to the NrdR family. Requires Zn(2+) as cofactor.

Negatively regulates transcription of bacterial ribonucleotide reductase nrd genes and operons by binding to NrdR-boxes. This chain is Transcriptional repressor NrdR, found in Burkholderia cenocepacia (strain ATCC BAA-245 / DSM 16553 / LMG 16656 / NCTC 13227 / J2315 / CF5610) (Burkholderia cepacia (strain J2315)).